The primary structure comprises 498 residues: ADP,ATP carrier protein 1 (498 aa).

The Cytoplasmic segment spans residues 1-33; it reads MSTTKSDNYISELRKVIWPIERYENKKFLPMAF. Residues 34–54 form a helical membrane-spanning segment; the sequence is MMFCILLNYSTLRSIKDGFVV. A disulfide bridge links C37 with C85. Topologically, residues 55 to 67 are extracellular; the sequence is TDIGAEAISFLKT. Residues 68 to 88 form a helical membrane-spanning segment; the sequence is YIVLPSAVIAMIVYVKLCDIL. The Cytoplasmic portion of the chain corresponds to 89–92; sequence KQEN. A helical membrane pass occupies residues 93–113; sequence VFYVITSFFLAYFALFAFVLY. Residues 114–147 lie on the Extracellular side of the membrane; that stretch reads PNPDLVHPNPEAIESLSLAYPNFKWFIRIVGKWS. The helical transmembrane segment at 148-168 threads the bilayer; the sequence is FASFYTMAELWGTLMLSLLFW. The Cytoplasmic portion of the chain corresponds to 169–184; the sequence is QFANQITKTDEAKRFY. Residues 185 to 205 form a helical membrane-spanning segment; sequence SMFGLLANLALPVTSLIIGYF. Residues 206–218 lie on the Extracellular side of the membrane; that stretch reads LHEKTQIVAEHLK. The chain crosses the membrane as a helical span at residues 219 to 239; it reads FTPLFVIMIISSLAVILTYRW. At 240–279 the chain is on the cytoplasmic side; sequence MNKNVLTDPKLYDPALVKGKKAKAKMSLIESFKMIFTSKY. The helical transmembrane segment at 280–300 threads the bilayer; the sequence is VGYIALLLIAYGISVNLVEGV. Over 301–320 the chain is Extracellular; the sequence is WKSKLKELHPTKEAYTMYMG. The helical transmembrane segment at 321-341 threads the bilayer; that stretch reads QFQAYQGWVAIAFMIIGSNIL. The Cytoplasmic portion of the chain corresponds to 342–348; sequence RKVSWLT. Residues 349 to 369 form a helical membrane-spanning segment; sequence AAMITPLMMLITGIAFFAFIF. The Extracellular portion of the chain corresponds to 370 to 379; it reads FDSVIAMYLT. A helical membrane pass occupies residues 380-400; sequence GILASGPLALAVMIGTIQNVL. At 401–438 the chain is on the cytoplasmic side; the sequence is SKGVKYSLFDATKNMAYIPLDKDLRVKGQAAVEVIGGR. 436 to 442 contributes to the ATP binding site; it reads GGRFGKS. The helical transmembrane segment at 439–459 threads the bilayer; the sequence is FGKSGGAIIQSTFFIIFPALG. Residues 460–465 lie on the Extracellular side of the membrane; the sequence is FVEATP. A helical transmembrane segment spans residues 466–486; the sequence is YFASIFFVIVILWIYAVKGLN. Over 487 to 498 the chain is Cytoplasmic; that stretch reads KEYQVLVNNTEK.

It belongs to the ADP/ATP translocase tlc family.

Its subcellular location is the cell membrane. In terms of biological role, provides the rickettsial cell with host ATP in exchange for rickettsial ADP. This is an obligate exchange system. This energy acquiring activity is an important component of rickettsial parasitism. This Rickettsia bellii (strain RML369-C) protein is ADP,ATP carrier protein 1 (tlcA).